A 263-amino-acid chain; its full sequence is 7beta-hydroxysteroid dehydrogenase (263 aa).

NADP(+) contacts are provided by residues 17–21 (TEGVG), 40–41 (RR), and 66–67 (DF). The Proton acceptor role is filled by tyrosine 156. Serine 240 is an NADP(+) binding site.

Belongs to the short-chain dehydrogenases/reductases (SDR) family.

It carries out the reaction a 7beta-hydroxysteroid + NADP(+) = a 7-oxosteroid + NADPH + H(+). The catalysed reaction is 7-oxolithocholate + NADPH + H(+) = ursodeoxycholate + NADP(+). Its function is as follows. 7beta-hydroxysteroid dehydrogenase that catalyzes the reduction of the 7-oxo group of 7-oxo-lithocholate (7-oxo-LCA), to yield ursodeoxycholate (UDCA). As R.gnavus is a common core bacterium of the human gut microbiota, this enzyme contributes to the formation of UDCA in the human colon. UDCA is regarded as a chemopreventive beneficial secondary bile acid due to its low hydrophobicity; it protects hepatocytes and bile duct epithelial cells against necrosis and apoptosis induced by more hydrophobic secondary bile acids like deoxycholate (DCA). This enzyme is also able to catalyze the reverse reaction in vitro, i.e. the oxidation of the 7beta-hydroxy group of UDCA to 7-oxo-LCA, but much less efficiently than the reduction reaction. The sequence is that of 7beta-hydroxysteroid dehydrogenase from Mediterraneibacter gnavus (strain ATCC 29149 / DSM 114966 / JCM 6515 / VPI C7-9) (Ruminococcus gnavus).